The chain runs to 110 residues: Integration host factor subunit alpha (110 aa).

This sequence belongs to the bacterial histone-like protein family. Heterodimer of an alpha and a beta chain.

This protein is one of the two subunits of integration host factor, a specific DNA-binding protein that functions in genetic recombination as well as in transcriptional and translational control. In Methylococcus capsulatus (strain ATCC 33009 / NCIMB 11132 / Bath), this protein is Integration host factor subunit alpha.